The chain runs to 422 residues: Gamma-glutamyl phosphate reductase (422 aa).

The protein belongs to the gamma-glutamyl phosphate reductase family.

It localises to the cytoplasm. It carries out the reaction L-glutamate 5-semialdehyde + phosphate + NADP(+) = L-glutamyl 5-phosphate + NADPH + H(+). Its pathway is amino-acid biosynthesis; L-proline biosynthesis; L-glutamate 5-semialdehyde from L-glutamate: step 2/2. Functionally, catalyzes the NADPH-dependent reduction of L-glutamate 5-phosphate into L-glutamate 5-semialdehyde and phosphate. The product spontaneously undergoes cyclization to form 1-pyrroline-5-carboxylate. The polypeptide is Gamma-glutamyl phosphate reductase (Shewanella piezotolerans (strain WP3 / JCM 13877)).